The primary structure comprises 202 residues: MQALVEAIRERGMILPGGMLKVDGLINHQLLPQLTREMGERFAAGFAPLNPNKVVTIEVSGIAPALATALALNVPLVYARKKKPITMQEPTFTAQSISRTKGGAVDLFVSSEYLGSGDRVVVIDDFLASGGTLRALAGIIALSGAELLGLGCVIEKGFEEGRAKLADLGVPILTLANILRMNEQEGIVVEAGLQDLPKQPAG.

Residues Leu20 and Asn27 each contribute to the xanthine site. 128–132 (ASGGT) is a binding site for 5-phospho-alpha-D-ribose 1-diphosphate. Lys156 is a binding site for xanthine.

Belongs to the purine/pyrimidine phosphoribosyltransferase family. Xpt subfamily. As to quaternary structure, homodimer.

It localises to the cytoplasm. The enzyme catalyses XMP + diphosphate = xanthine + 5-phospho-alpha-D-ribose 1-diphosphate. The protein operates within purine metabolism; XMP biosynthesis via salvage pathway; XMP from xanthine: step 1/1. Functionally, converts the preformed base xanthine, a product of nucleic acid breakdown, to xanthosine 5'-monophosphate (XMP), so it can be reused for RNA or DNA synthesis. The chain is Xanthine phosphoribosyltransferase from Deinococcus geothermalis (strain DSM 11300 / CIP 105573 / AG-3a).